A 262-amino-acid polypeptide reads, in one-letter code: Type III pantothenate kinase (262 aa).

9–16 (DIGNTNVK) serves as a coordination point for ATP. Substrate is bound by residues tyrosine 103 and 110–113 (GADR). Aspartate 112 (proton acceptor) is an active-site residue. Aspartate 134 contributes to the K(+) binding site. Threonine 137 is an ATP binding site. Threonine 190 is a binding site for substrate.

The protein belongs to the type III pantothenate kinase family. Homodimer. NH4(+) is required as a cofactor. K(+) serves as cofactor.

The protein localises to the cytoplasm. The enzyme catalyses (R)-pantothenate + ATP = (R)-4'-phosphopantothenate + ADP + H(+). It functions in the pathway cofactor biosynthesis; coenzyme A biosynthesis; CoA from (R)-pantothenate: step 1/5. Catalyzes the phosphorylation of pantothenate (Pan), the first step in CoA biosynthesis. This Nitratidesulfovibrio vulgaris (strain DSM 19637 / Miyazaki F) (Desulfovibrio vulgaris) protein is Type III pantothenate kinase.